We begin with the raw amino-acid sequence, 131 residues long: D-ribose pyranase (131 aa).

H20 serves as the catalytic Proton donor. Substrate is bound by residues D28, H98, and 120–122 (YAN).

It belongs to the RbsD / FucU family. RbsD subfamily. As to quaternary structure, homodecamer.

The protein localises to the cytoplasm. The enzyme catalyses beta-D-ribopyranose = beta-D-ribofuranose. It functions in the pathway carbohydrate metabolism; D-ribose degradation; D-ribose 5-phosphate from beta-D-ribopyranose: step 1/2. Functionally, catalyzes the interconversion of beta-pyran and beta-furan forms of D-ribose. The protein is D-ribose pyranase of Bacillus cereus (strain ATCC 10987 / NRS 248).